Consider the following 366-residue polypeptide: Pectinesterase A (366 aa).

A signal peptide spans 1 to 24; it reads MLKTISGTLALSLIIAASVHQAQA. Positions 109 and 153 each coordinate substrate. Asp178 (proton donor) is an active-site residue. The cysteines at positions 192 and 212 are disulfide-linked. The active-site Nucleophile is Asp199. 6 residues coordinate substrate: Arg219, Asn226, Tyr230, Arg267, Trp269, and Thr272.

The protein belongs to the pectinesterase family. As to quaternary structure, monomer.

The protein resides in the secreted. It carries out the reaction [(1-&gt;4)-alpha-D-galacturonosyl methyl ester](n) + n H2O = [(1-&gt;4)-alpha-D-galacturonosyl](n) + n methanol + n H(+). It functions in the pathway glycan metabolism; pectin degradation; 2-dehydro-3-deoxy-D-gluconate from pectin: step 1/5. In terms of biological role, catalyzes the first step in maceration and soft-rotting of plant tissue. The protein is Pectinesterase A of Dickeya dadantii (strain 3937) (Erwinia chrysanthemi (strain 3937)).